The primary structure comprises 237 residues: Phosphoribosylaminoimidazole-succinocarboxamide synthase (237 aa).

The protein belongs to the SAICAR synthetase family.

The catalysed reaction is 5-amino-1-(5-phospho-D-ribosyl)imidazole-4-carboxylate + L-aspartate + ATP = (2S)-2-[5-amino-1-(5-phospho-beta-D-ribosyl)imidazole-4-carboxamido]succinate + ADP + phosphate + 2 H(+). Its pathway is purine metabolism; IMP biosynthesis via de novo pathway; 5-amino-1-(5-phospho-D-ribosyl)imidazole-4-carboxamide from 5-amino-1-(5-phospho-D-ribosyl)imidazole-4-carboxylate: step 1/2. The polypeptide is Phosphoribosylaminoimidazole-succinocarboxamide synthase (Sodalis glossinidius (strain morsitans)).